Reading from the N-terminus, the 553-residue chain is Putative transport protein YidE (553 aa).

5 helical membrane passes run 4–24 (IALT…IGNV), 28–48 (GIGL…HFVS), 65–85 (FGLI…FFAS), 95–115 (LFAV…HKLF), and 158–178 (MSYA…MWML). RCK C-terminal domains are found at residues 191–276 (QQHE…VIGQ) and 279–361 (DTSL…VLGN). 6 helical membrane passes run 371–391 (MLPV…PVFV), 393–413 (GFPA…ALIL), 439–459 (IVLF…NTLV), 464–484 (LSWI…VGIL), 493–513 (YLTM…LAFA), and 533–553 (LVMF…WSIG).

Belongs to the AAE transporter (TC 2.A.81) family. YidE subfamily.

Its subcellular location is the cell membrane. This Shigella boydii serotype 4 (strain Sb227) protein is Putative transport protein YidE.